Consider the following 354-residue polypeptide: UDP-3-O-acylglucosamine N-acyltransferase (354 aa).

H245 serves as the catalytic Proton acceptor.

The protein belongs to the transferase hexapeptide repeat family. LpxD subfamily. Homotrimer.

The catalysed reaction is a UDP-3-O-[(3R)-3-hydroxyacyl]-alpha-D-glucosamine + a (3R)-hydroxyacyl-[ACP] = a UDP-2-N,3-O-bis[(3R)-3-hydroxyacyl]-alpha-D-glucosamine + holo-[ACP] + H(+). Its pathway is bacterial outer membrane biogenesis; LPS lipid A biosynthesis. Functionally, catalyzes the N-acylation of UDP-3-O-acylglucosamine using 3-hydroxyacyl-ACP as the acyl donor. Is involved in the biosynthesis of lipid A, a phosphorylated glycolipid that anchors the lipopolysaccharide to the outer membrane of the cell. The chain is UDP-3-O-acylglucosamine N-acyltransferase from Anaeromyxobacter sp. (strain K).